The following is a 674-amino-acid chain: Protein asunder (674 aa).

A coiled-coil region spans residues 516–538 (HKAKDQYRLLYRELEQLIQLNAS). The short motif at 601-607 (LKASKRR) is the Nuclear localization signal (NLS) element.

Belongs to the Integrator subunit 13 family. Belongs to the multiprotein complex Integrator, at least composed of IntS1, IntS2, IntS3, IntS4, omd/IntS5, IntS6, defl/IntS7, IntS8, IntS9, IntS10, IntS11, IntS12, asun/IntS13, IntS14 and IntS15. The core complex associates with protein phosphatase 2A subunits mts/PP2A and Pp2A-29B, to form the Integrator-PP2A (INTAC) complex. Phosphorylated.

It localises to the nucleus. The protein localises to the cytoplasm. It is found in the perinuclear region. Functionally, component of the integrator complex, a multiprotein complex that terminates RNA polymerase II (Pol II) transcription in the promoter-proximal region of genes. The integrator complex provides a quality checkpoint during transcription elongation by driving premature transcription termination of transcripts that are unfavorably configured for transcriptional elongation: the complex terminates transcription by (1) catalyzing dephosphorylation of the C-terminal domain (CTD) of Pol II subunit Polr2A/Rbp1 and Spt5, and (2) degrading the exiting nascent RNA transcript via endonuclease activity. The integrator complex is also involved in the 3'-end processing of the U7 snRNA, and also the spliceosomal snRNAs U1, U2, U4 and U5. In Drosophila persimilis (Fruit fly), this protein is Protein asunder (asun).